The sequence spans 336 residues: Protein SphX (336 aa).

The signal sequence occupies residues 1-27; sequence MFDLSRLSRGIVPMALLLLGISACTPS.

The protein belongs to the PstS family.

Functionally, may be involved in the system for phosphate transport across the cytoplasmic membrane. This is Protein SphX (sphX) from Synechocystis sp. (strain ATCC 27184 / PCC 6803 / Kazusa).